A 137-amino-acid chain; its full sequence is MVAAKKHVPIVKKHKTTFARHQSDRFDRVGSSWRKPKGIDGRVRRRFRGTIRMPKIGYGSNKKTRFLTPSGHNAFLHNARTLSCAAGCSMQSTDPSAAEIATPVSSRKRIASSPARQADRCSRSRRSKFRPRRLRAS.

A disordered region spans residues 95–137; the sequence is PSAAEIATPVSSRKRIASSPARQADRCSRSRRSKFRPRRLRAS. Basic residues predominate over residues 123-137; the sequence is RSRRSKFRPRRLRAS.

This sequence belongs to the eukaryotic ribosomal protein eL32 family.

In Trichoderma harzianum (Hypocrea lixii), this protein is Large ribosomal subunit protein eL32 (rpl32).